The primary structure comprises 49 residues: Small ribosomal subunit protein eS31 (49 aa).

4 residues coordinate Zn(2+): Cys-21, Cys-24, Cys-39, and Cys-42. A C4-type zinc finger spans residues 21–42 (CPRCGPGVFLADHKNRLACGKC).

It belongs to the eukaryotic ribosomal protein eS31 family. Part of the 30S ribosomal subunit. It depends on Zn(2+) as a cofactor.

This Methanosarcina mazei (strain ATCC BAA-159 / DSM 3647 / Goe1 / Go1 / JCM 11833 / OCM 88) (Methanosarcina frisia) protein is Small ribosomal subunit protein eS31.